A 608-amino-acid polypeptide reads, in one-letter code: uncharacterized protein (608 aa).

The signal sequence occupies residues 1 to 38; sequence MWLQQRLKVFPGLLSSSWARRVLAVSGFLVIIYWYIFS. Residues 39-563 are Extracellular-facing; sequence GSLFRSFWYA…EEHMAKQYRG (525 aa). An N-linked (GlcNAc...) asparagine glycan is attached at N337. Residues 564–584 form a helical membrane-spanning segment; the sequence is LPFLFWFSVASLITLFHLFLF. The Cytoplasmic portion of the chain corresponds to 585–608; that stretch reads KLIYNEYCGPGAKPLFRSKEDTSV.

The protein localises to the membrane. This is an uncharacterized protein from Xenopus tropicalis (Western clawed frog).